The primary structure comprises 412 residues: Serine hydroxymethyltransferase (412 aa).

(6S)-5,6,7,8-tetrahydrofolate-binding positions include Leu117 and 121-123; that span reads GHL. Lys226 bears the N6-(pyridoxal phosphate)lysine mark.

Belongs to the SHMT family. In terms of assembly, homodimer. It depends on pyridoxal 5'-phosphate as a cofactor.

It localises to the cytoplasm. It carries out the reaction (6R)-5,10-methylene-5,6,7,8-tetrahydrofolate + glycine + H2O = (6S)-5,6,7,8-tetrahydrofolate + L-serine. It participates in one-carbon metabolism; tetrahydrofolate interconversion. Its pathway is amino-acid biosynthesis; glycine biosynthesis; glycine from L-serine: step 1/1. Its function is as follows. Catalyzes the reversible interconversion of serine and glycine with tetrahydrofolate (THF) serving as the one-carbon carrier. This reaction serves as the major source of one-carbon groups required for the biosynthesis of purines, thymidylate, methionine, and other important biomolecules. Also exhibits THF-independent aldolase activity toward beta-hydroxyamino acids, producing glycine and aldehydes, via a retro-aldol mechanism. This chain is Serine hydroxymethyltransferase, found in Natranaerobius thermophilus (strain ATCC BAA-1301 / DSM 18059 / JW/NM-WN-LF).